Reading from the N-terminus, the 191-residue chain is Calcium-activated potassium channel subunit beta-1 (191 aa).

The Cytoplasmic portion of the chain corresponds to 2–18 (GKKLVMAQRRGETRALC). The helical transmembrane segment at 19–39 (LGVAMVVGAVITYYILGTTVL) threads the bilayer. Residues 40–157 (PLYQKSVWTQ…YRRLYGPQSL (118 aa)) are Extracellular-facing. 2 N-linked (GlcNAc...) asparagine glycosylation sites follow: Asn-80 and Asn-142. A helical membrane pass occupies residues 158 to 178 (LFSLFWPTFLLTGGLLIIVMV). At 179–191 (KINQSLSILAAQR) the chain is on the cytoplasmic side.

This sequence belongs to the KCNMB (TC 8.A.14.1) family. KCNMB1 subfamily. As to quaternary structure, interacts with KCNMA1 tetramer. There are probably 4 molecules of KCMNB1 per KCNMA1 tetramer. In terms of processing, N-glycosylated.

The protein resides in the membrane. Functionally, regulatory subunit of the calcium activated potassium KCNMA1 (maxiK) channel. Modulates the calcium sensitivity and gating kinetics of KCNMA1, thereby contributing to KCNMA1 channel diversity. Increases the apparent Ca(2+)/voltage sensitivity of the KCNMA1 channel. It also modifies KCNMA1 channel kinetics and alters its pharmacological properties. It slows down the activation and the deactivation kinetics of the channel. Acts as a negative regulator of smooth muscle contraction by enhancing the calcium sensitivity to KCNMA1. Its presence is also a requirement for internal binding of the KCNMA1 channel opener dehydrosoyasaponin I (DHS-1) triterpene glycoside and for external binding of the agonist hormone 17-beta-estradiol (E2). Increases the binding activity of charybdotoxin (CTX) toxin to KCNMA1 peptide blocker by increasing the CTX association rate and decreasing the dissociation rate. The sequence is that of Calcium-activated potassium channel subunit beta-1 (KCNMB1) from Bos taurus (Bovine).